A 100-amino-acid polypeptide reads, in one-letter code: A-type ATP synthase subunit F (100 aa).

It belongs to the V-ATPase F subunit family. As to quaternary structure, has multiple subunits with at least A(3), B(3), C, D, E, F, H, I and proteolipid K(x).

The protein localises to the cell membrane. Functionally, component of the A-type ATP synthase that produces ATP from ADP in the presence of a proton gradient across the membrane. The sequence is that of A-type ATP synthase subunit F from Methanospirillum hungatei JF-1 (strain ATCC 27890 / DSM 864 / NBRC 100397 / JF-1).